The sequence spans 478 residues: Septin-4 (478 aa).

The disordered stretch occupies residues 1–115 (MDRSLGWQGN…RSPWGKLDPY (115 aa)). Residues 13–26 (PEDRTEAGIKRFLE) are compositionally biased toward basic and acidic residues. The span at 95 to 108 (APAPLSPSARPRSP) shows a compositional bias: low complexity. Phosphoserine occurs at positions 117 and 118. One can recognise a Septin-type G domain in the interval 141 to 414 (KGFDFTLMVA…ENYRAQCIQS (274 aa)). Residues 151–158 (GESGLGKS) form a G1 motif region. GTP-binding positions include 151–158 (GESGLGKS) and Thr185. Residues 208-211 (DTPG) are G3 motif. A G4 motif region spans residues 289–292 (AKAD). Position 290–298 (290–298 (KADTLTPPE)) interacts with GTP. Phosphoserine is present on Ser325. Gly348 and Arg363 together coordinate GTP. The interval 428–448 (LTRESGTDFPIPAVPPGTDPE) is disordered. A Phosphoserine modification is found at Ser432. Thr434 carries the phosphothreonine modification. Positions 447–478 (PETEKLIREKDEELRRMQEMLHKIQKQMKENY) form a coiled coil.

Belongs to the TRAFAC class TrmE-Era-EngA-EngB-Septin-like GTPase superfamily. Septin GTPase family. As to quaternary structure, septins polymerize into heterooligomeric protein complexes that form filaments, and can associate with cellular membranes, actin filaments and microtubules. GTPase activity is required for filament formation. Interacts with SEPTIN8. In a mesenchymal cell line, interacts with SEPTIN9 isoform 2 variants HNA Trp-106 and Phe-111, but not the wild type SEPTIN9. Component of a septin core octameric complex consisting of SEPTIN12, SEPTIN7, SEPTIN6 and SEPTIN2 or SEPTIN4 in the order 12-7-6-2-2-6-7-12 or 12-7-6-4-4-6-7-12. Interacts with SEPTIN14 (via C-terminus). Interacts with DYRK1A. Interacts with SLC6A3/DAT and SNCA/alpha-synuclein. Interacts with STX1A; in the striatum. Interacts with XIAP (via BIR3 domain) following the induction of apoptosis. Interacts with AREL1 (via HECT domain); in the cytoplasm following induction of apoptosis. Part of a complex composed of SEPTIN4 isoform ARTS, XIAP and BCL2, within the complex interacts with both BCL2 (via BH3 domain) and XIAP, ARTS acts as a scaffold protein and stabilizes the complex. Interacts with XIAP (via BIR3 domain) following the induction of apoptosis. Post-translationally, phosphorylated by DYRK1A. In terms of processing, ubiquitinated by AREL1. In terms of tissue distribution, widely expressed in adult and fetal tissues with highest expression in adult brain (at protein level), heart, liver and adrenal gland and fetal heart, kidney, liver and lung. Expressed in presynaptic terminals of dopaminergic neurons projecting from the substantia nigra pars compacta to the striatum (at protein level). Expressed in axonal varicosities in dopaminergic nerve terminals (at protein level). Expressed in the putamen and in the adjacent cerebral cortex (at protein level). Expressed in colonic crypts (at protein level). Also expressed in colorectal cancers and malignant melanomas. Expressed in platelets. As to expression, highly expressed in the brain and heart.

Its subcellular location is the cytoplasm. It is found in the cell projection. The protein resides in the cilium. The protein localises to the flagellum. It localises to the cytoplasmic vesicle. Its subcellular location is the secretory vesicle. It is found in the axon. The protein resides in the dendrite. The protein localises to the perikaryon. It localises to the synapse. Its subcellular location is the mitochondrion. It is found in the nucleus. In terms of biological role, filament-forming cytoskeletal GTPase. Pro-apoptotic protein involved in LGR5-positive intestinal stem cell and Paneth cell expansion in the intestines, via its interaction with XIAP. May also play a role in the regulation of cell fate in the intestine. Positive regulator of apoptosis involved in hematopoietic stem cell homeostasis; via its interaction with XIAP. Negative regulator of repair and hair follicle regeneration in response to injury, due to inhibition of hair follicle stem cell proliferation, potentially via its interaction with XIAP. Plays an important role in male fertility and sperm motility. During spermiogenesis, essential for the establishment of the annulus (a fibrous ring structure connecting the midpiece and the principal piece of the sperm flagellum) which is a requisite for the structural and mechanical integrity of the sperm. Involved in the migration of cortical neurons and the formation of neuron leading processes during embryonic development. Required for dopaminergic metabolism in presynaptic autoreceptors; potentially via activity as a presynaptic scaffold protein. Functionally, required for the induction of cell death mediated by TGF-beta and possibly by other apoptotic stimuli. Induces apoptosis through binding and inhibition of XIAP resulting in significant reduction in XIAP levels, leading to caspase activation and cell death. Mediates the interaction between BCL2 and XIAP, thereby positively regulating the ubiquitination and degradation of BCL2 and promoting apoptosis. In Homo sapiens (Human), this protein is Septin-4.